The primary structure comprises 375 residues: MSKTLALTEELIALSSVTPEDKGCQSRLIELLSPLGFVCETIESDGVTNLWARKGTAQPLLVFAGHTDVVPTGPLDQWTSPPFVPTQRDGKLYGRGAADMKTSIAAMVVAAEEFVHAHPDHKGSIGFLITSDEEGPATDGTVIVCNALKARGEQLDYCVVGEPTSSDVLGDTIKNGRRGSMSGKLTVKGIQGHIAYPQLARNPIHQCAPALAELVAEKWDDGNEYYLPTSWQVSNMHGGAGASNVIPGNVVIDFNFRFCTASTVEGLQQRVHAILDKHGLEYDLKWSISGYPFLTPKGSLSDAMADAIKSETGVTTELSTTGGTSDGRFIAQICPQVVEFGPPNGSIHKIDEHIEVRFIDPLKNIYRHTMENLLL.

Residue histidine 66 participates in Zn(2+) binding. The active site involves aspartate 68. Aspartate 99 provides a ligand contact to Zn(2+). Glutamate 133 acts as the Proton acceptor in catalysis. Zn(2+)-binding residues include glutamate 134, glutamate 162, and histidine 348.

It belongs to the peptidase M20A family. DapE subfamily. In terms of assembly, homodimer. It depends on Zn(2+) as a cofactor. Co(2+) serves as cofactor.

The catalysed reaction is N-succinyl-(2S,6S)-2,6-diaminopimelate + H2O = (2S,6S)-2,6-diaminopimelate + succinate. It functions in the pathway amino-acid biosynthesis; L-lysine biosynthesis via DAP pathway; LL-2,6-diaminopimelate from (S)-tetrahydrodipicolinate (succinylase route): step 3/3. In terms of biological role, catalyzes the hydrolysis of N-succinyl-L,L-diaminopimelic acid (SDAP), forming succinate and LL-2,6-diaminopimelate (DAP), an intermediate involved in the bacterial biosynthesis of lysine and meso-diaminopimelic acid, an essential component of bacterial cell walls. The polypeptide is Succinyl-diaminopimelate desuccinylase (Herminiimonas arsenicoxydans).